We begin with the raw amino-acid sequence, 553 residues long: Protein spartin (553 aa).

In terms of domain architecture, MIT spans 15-96; that stretch reads IRTAYKAAMT…ETELRYRLKV (82 aa). Residues 105–130 form a disordered region; sequence DDSAVEATEESRAEMDTKRPPLLAEN. Basic and acidic residues predominate over residues 113 to 123; the sequence is EESRAEMDTKR. Residues 325–509 enclose the Senescence domain; that stretch reads IVSAADFIAS…SQNVNYITPK (185 aa).

As to quaternary structure, interacts with Eps-15 (via C-terminal region); the interaction is required for spartin localization to the NMJ presynaptic membrane. As to expression, expressed in larval brain, ventral nerve cord and neuropil (at protein level).

The protein resides in the presynaptic cell membrane. It is found in the early endosome. The protein localises to the lipid droplet. During postembryonic development, functions with endocytic adapter Eps-15 in neurons to restrain synaptic growth, by inhibiting BMP signaling, and to control synaptic endocytosis. Required presynaptically for neuromuscular junction (NMJ) neurotransmission. Inhibits neuronal BMP signaling by promoting endocytic internalization and subsequent endosomal trafficking of the BMP receptor wit. In this way, regulates the Fmr1 translational regulator controlling Futsch expression to modulate neuronal microtubule stability, which controls both synaptogenesis and neuronal survival. The sequence is that of Protein spartin from Drosophila melanogaster (Fruit fly).